The chain runs to 36 residues: Photosystem II reaction center protein M (36 aa).

A helical transmembrane segment spans residues 5-25 (ILGLIATALFIIIPTSFLLIL).

This sequence belongs to the PsbM family. In terms of assembly, PSII is composed of 1 copy each of membrane proteins PsbA, PsbB, PsbC, PsbD, PsbE, PsbF, PsbH, PsbI, PsbJ, PsbK, PsbL, PsbM, PsbT, PsbX, PsbY, PsbZ, Psb30/Ycf12, at least 3 peripheral proteins of the oxygen-evolving complex and a large number of cofactors. It forms dimeric complexes.

The protein localises to the plastid. The protein resides in the chloroplast thylakoid membrane. Its function is as follows. One of the components of the core complex of photosystem II (PSII). PSII is a light-driven water:plastoquinone oxidoreductase that uses light energy to abstract electrons from H(2)O, generating O(2) and a proton gradient subsequently used for ATP formation. It consists of a core antenna complex that captures photons, and an electron transfer chain that converts photonic excitation into a charge separation. This subunit is found at the monomer-monomer interface. The chain is Photosystem II reaction center protein M from Chlorokybus atmophyticus (Soil alga).